The sequence spans 207 residues: MKTKILSLANEEVGEITLNKDIFAVEFIRDDIIKQVIDWQRAKAMFGNHKTKTVSEVSGTTKKPFKQKGTGNARQGSLRSVQMRGGGISHGPKVRSHAIKLPKKVRKLGLIHALSEKYAEEKLLIIDSLKLDKPKTSILVNLLSKFQGQSFFVIDGNKVDINFSLATKNIYNTLIVPQIGANVYDIIRHEYVLLSQEAVSFLEERLR.

The segment at 56-75 is disordered; sequence EVSGTTKKPFKQKGTGNARQ.

The protein belongs to the universal ribosomal protein uL4 family. Part of the 50S ribosomal subunit.

Its function is as follows. One of the primary rRNA binding proteins, this protein initially binds near the 5'-end of the 23S rRNA. It is important during the early stages of 50S assembly. It makes multiple contacts with different domains of the 23S rRNA in the assembled 50S subunit and ribosome. Forms part of the polypeptide exit tunnel. The chain is Large ribosomal subunit protein uL4 from Rickettsia prowazekii (strain Madrid E).